The following is a 275-amino-acid chain: Adaptin ear-binding coat-associated protein 1 (275 aa).

Residues Ile-166 to Pro-190 form a disordered region. Positions Thr-167–Ala-179 are enriched in low complexity. A Phosphothreonine modification is found at Thr-211. Residues Ile-215–Phe-275 are disordered. 2 consecutive short sequence motifs (WXXF motif) follow at residues Trp-252–Phe-255 and Trp-272–Phe-275. The span at Ser-256 to Phe-275 shows a compositional bias: polar residues.

This sequence belongs to the NECAP family. Interacts with AP1G1 and AP2A1 components of the adapter protein complexes AP-1 and AP-2. Interacts with the GAE domain proteins GGA1, GGA2 and GGA3.

It localises to the cytoplasmic vesicle. The protein localises to the clathrin-coated vesicle membrane. Its subcellular location is the cell membrane. Its function is as follows. Involved in endocytosis. This Bos taurus (Bovine) protein is Adaptin ear-binding coat-associated protein 1 (NECAP1).